A 146-amino-acid chain; its full sequence is Putative pre-16S rRNA nuclease (146 aa).

The protein belongs to the YqgF nuclease family.

The protein resides in the cytoplasm. Functionally, could be a nuclease involved in processing of the 5'-end of pre-16S rRNA. The polypeptide is Putative pre-16S rRNA nuclease (Pediococcus pentosaceus (strain ATCC 25745 / CCUG 21536 / LMG 10740 / 183-1w)).